The chain runs to 419 residues: GTPase Obg (419 aa).

In terms of domain architecture, Obg spans 1-156 (MRFVDYVSIE…FYLDLQLKVM (156 aa)). One can recognise an OBG-type G domain in the interval 157 to 334 (ADIGLVGKPN…LGENQKKLEI (178 aa)). Residues 163-170 (GKPNAGKS), 188-192 (FTTLV), 209-212 (DLPG), 278-281 (NKCD), and 315-317 (NII) contribute to the GTP site. The Mg(2+) site is built by Ser-170 and Thr-190. The 78-residue stretch at 342-419 (IEFNLKAPFL…RIYEFEFHWN (78 aa)) folds into the OCT domain.

It belongs to the TRAFAC class OBG-HflX-like GTPase superfamily. OBG GTPase family. As to quaternary structure, monomer. Mg(2+) is required as a cofactor.

The protein localises to the cytoplasm. An essential GTPase which binds GTP, GDP and possibly (p)ppGpp with moderate affinity, with high nucleotide exchange rates and a fairly low GTP hydrolysis rate. Plays a role in control of the cell cycle, stress response, ribosome biogenesis and in those bacteria that undergo differentiation, in morphogenesis control. This chain is GTPase Obg, found in Mesomycoplasma hyopneumoniae (strain 7448) (Mycoplasma hyopneumoniae).